We begin with the raw amino-acid sequence, 127 residues long: Large ribosomal subunit protein uL22 (127 aa).

It belongs to the universal ribosomal protein uL22 family. Part of the 50S ribosomal subunit.

Its function is as follows. This protein binds specifically to 23S rRNA; its binding is stimulated by other ribosomal proteins, e.g. L4, L17, and L20. It is important during the early stages of 50S assembly. It makes multiple contacts with different domains of the 23S rRNA in the assembled 50S subunit and ribosome. In terms of biological role, the globular domain of the protein is located near the polypeptide exit tunnel on the outside of the subunit, while an extended beta-hairpin is found that lines the wall of the exit tunnel in the center of the 70S ribosome. The protein is Large ribosomal subunit protein uL22 of Brucella suis (strain ATCC 23445 / NCTC 10510).